We begin with the raw amino-acid sequence, 330 residues long: Methionyl-tRNA formyltransferase (330 aa).

121-124 is a binding site for (6S)-5,6,7,8-tetrahydrofolate; it reads SLLP.

It belongs to the Fmt family.

It carries out the reaction L-methionyl-tRNA(fMet) + (6R)-10-formyltetrahydrofolate = N-formyl-L-methionyl-tRNA(fMet) + (6S)-5,6,7,8-tetrahydrofolate + H(+). Functionally, attaches a formyl group to the free amino group of methionyl-tRNA(fMet). The formyl group appears to play a dual role in the initiator identity of N-formylmethionyl-tRNA by promoting its recognition by IF2 and preventing the misappropriation of this tRNA by the elongation apparatus. The sequence is that of Methionyl-tRNA formyltransferase from Burkholderia cenocepacia (strain ATCC BAA-245 / DSM 16553 / LMG 16656 / NCTC 13227 / J2315 / CF5610) (Burkholderia cepacia (strain J2315)).